A 119-amino-acid chain; its full sequence is Autophagy-related protein 8C-like (119 aa).

Residue Gly-117 is the site of Phosphatidylethanolamine amidated glycine attachment. Positions 118–119 (SF) are cleaved as a propeptide — removed in mature form.

Belongs to the ATG8 family. In terms of assembly, interacts with ATG4. Interacts with the Phytophtora infestans effector PexRD54. Interacts with JOKA2. The C-terminal 2 residues are removed by ATG4 to expose Gly-117 at the C-terminus. The C-terminal Gly is then amidated with phosphatidylethanolamine by an activating system similar to that for ubiquitin. The phosphatidylethanolamine amidated glycine is required for autophagosome formation.

The protein localises to the cytoplasmic vesicle. Its subcellular location is the autophagosome membrane. The protein resides in the vacuole membrane. It is found in the cytoplasm. It localises to the cytoskeleton. Ubiquitin-like modifier involved in autophagosomes formation. May mediate the delivery of the autophagosomes to the vacuole via the microtubule cytoskeleton. ATG8CL-mediated selective autophagy contributes to defense against the fungal pathogen Phytophtora infestans. This is Autophagy-related protein 8C-like from Solanum tuberosum (Potato).